The primary structure comprises 345 residues: Protein RecA (345 aa).

65–72 (GPESSGKT) is a binding site for ATP.

The protein belongs to the RecA family.

It localises to the cytoplasm. Functionally, can catalyze the hydrolysis of ATP in the presence of single-stranded DNA, the ATP-dependent uptake of single-stranded DNA by duplex DNA, and the ATP-dependent hybridization of homologous single-stranded DNAs. It interacts with LexA causing its activation and leading to its autocatalytic cleavage. The sequence is that of Protein RecA from Sulfurimonas denitrificans (strain ATCC 33889 / DSM 1251) (Thiomicrospira denitrificans (strain ATCC 33889 / DSM 1251)).